Consider the following 44-residue polypeptide: GKCGDINAPCTSACDCCGKSVECDCYWGKECSCRESFFGAATXL.

4 disulfide bridges follow: Cys-3-Cys-17, Cys-10-Cys-23, Cys-16-Cys-33, and Cys-25-Cys-31.

In terms of tissue distribution, expressed by the venom gland.

It is found in the secreted. Functionally, insecticidal neurotoxin that reversibly inhibits the N-methyl-D-aspartate (NMDA)-subtype of ionotropic glutamate receptor (GRIN) and inhibits inactivation of insect sodium channels (Nav). In vivo, is highly toxic to insects. In Ctenus ornatus (Brazilian spider), this protein is U9-ctenitoxin-Co1a.